The primary structure comprises 62 residues: MCGSYYGNYYGDHGYGCCGYEGLGYGYGSLRCGYSSCCGYGHGYGSRFFCGCGYGCGSGYYY.

It belongs to the KRTAP type 6 family. Interacts with hair keratins.

Functionally, in the hair cortex, hair keratin intermediate filaments are embedded in an interfilamentous matrix, consisting of hair keratin-associated proteins (KRTAP), which are essential for the formation of a rigid and resistant hair shaft through their extensive disulfide bond cross-linking with abundant cysteine residues of hair keratins. The matrix proteins include the high-sulfur and high-glycine-tyrosine keratins. This is Keratin-associated protein 6-2 (KRTAP6-2) from Homo sapiens (Human).